Reading from the N-terminus, the 424-residue chain is GTPase Obg (424 aa).

The Obg domain maps to 1–159 (MVFIDTARIY…MWVRLELKLL (159 aa)). Residues 160–330 (ADVGLVGFPN…LLDKTIEILS (171 aa)) form the OBG-type G domain. GTP-binding positions include 166–173 (GFPNAGKS), 191–195 (FTTLT), 212–215 (DIPG), 282–285 (NKMD), and 311–313 (SAL). Residues serine 173 and threonine 193 each contribute to the Mg(2+) site. The region spanning 347–424 (NPPEEEETLE…VRDFEFEYYE (78 aa)) is the OCT domain.

It belongs to the TRAFAC class OBG-HflX-like GTPase superfamily. OBG GTPase family. Monomer. The cofactor is Mg(2+).

Its subcellular location is the cytoplasm. An essential GTPase which binds GTP, GDP and possibly (p)ppGpp with moderate affinity, with high nucleotide exchange rates and a fairly low GTP hydrolysis rate. Plays a role in control of the cell cycle, stress response, ribosome biogenesis and in those bacteria that undergo differentiation, in morphogenesis control. The polypeptide is GTPase Obg (Caldanaerobacter subterraneus subsp. tengcongensis (strain DSM 15242 / JCM 11007 / NBRC 100824 / MB4) (Thermoanaerobacter tengcongensis)).